The chain runs to 522 residues: MGEHFLLEMVDITKEFPGVKALDRVQLKVRKGSVHALMGENGAGKSTLMKILIGMYKPNEGKIIFDGEEVTFNSINDALDKGISMIHQELSPIPEMTVAENIFLGREPTFGKSGLVDNKKLIEMTRNLLESLEINIDPRKKMGELSIANTQMIEIAKAISFHSKLVIMDEPTSAITEKEVAQLFKMIESLKKKGVGIIYITHKMSELDEIADDISVFRDGKYIGTDTAKNLTRDDLIKMMVGRELNQIFDKPEPKLGEVILSVKSLTKQDYFEDVSFEVRKGEIVGFAGLMGSGRTEVLETIFGVKEAESGEIFVNGQKARIKSPQDAVKNNMGFLTEDRKLTGLFLPLSVRENMITVNIDKYINMGWLNGKRVKKDCEQQKQKLYIKTPSIEQIVENLSGGNQQKVLLARWLLKNPDILFLDEPTRGIDVGAKSEFYNLIFELASQGKAIVVVSSEMAEILGLCDRILVMHEGKVTGELTREEANQEKIMQYATGQAKMAKKLHVHNNFEQTVTANKIEIG.

ABC transporter domains are found at residues Leu7–Glu244 and Pro254–Ala498. Gly39–Ser46 is a binding site for ATP.

This sequence belongs to the ABC transporter superfamily. Carbohydrate importer 2 (CUT2) (TC 3.A.1.2) family.

It is found in the cell membrane. It catalyses the reaction D-ribose(out) + ATP + H2O = D-ribose(in) + ADP + phosphate + H(+). The enzyme catalyses D-galactose(out) + ATP + H2O = D-galactose(in) + ADP + phosphate + H(+). Functionally, part of an ABC transporter complex involved in carbohydrate import. Could be involved in ribose, galactose and/or methyl galactoside import. Responsible for energy coupling to the transport system. This chain is Putative ribose/galactose/methyl galactoside import ATP-binding protein, found in Halalkalibacterium halodurans (strain ATCC BAA-125 / DSM 18197 / FERM 7344 / JCM 9153 / C-125) (Bacillus halodurans).